Here is a 424-residue protein sequence, read N- to C-terminus: Endoglucanase (424 aa).

Positions 1 to 19 are cleaved as a signal peptide; the sequence is MHRCMPLVAASMAALMLAG. A lipid anchor (N-palmitoyl cysteine) is attached at Cys-20. The S-diacylglycerol cysteine moiety is linked to residue Cys-20. The propeptide occupies 20-43; the sequence is CGGGDGDTTLSTAAATDTTTLKTA. The active-site Proton donor is the Glu-247. The active-site Nucleophile is Glu-359.

It belongs to the glycosyl hydrolase 5 (cellulase A) family.

The protein resides in the cell membrane. The enzyme catalyses Endohydrolysis of (1-&gt;4)-beta-D-glucosidic linkages in cellulose, lichenin and cereal beta-D-glucans.. In Ralstonia nicotianae (strain ATCC BAA-1114 / GMI1000) (Ralstonia solanacearum), this protein is Endoglucanase (egl).